A 339-amino-acid chain; its full sequence is Phenylalanine--tRNA ligase alpha subunit (339 aa).

E254 lines the Mg(2+) pocket.

Belongs to the class-II aminoacyl-tRNA synthetase family. Phe-tRNA synthetase alpha subunit type 1 subfamily. As to quaternary structure, tetramer of two alpha and two beta subunits. Requires Mg(2+) as cofactor.

The protein localises to the cytoplasm. The enzyme catalyses tRNA(Phe) + L-phenylalanine + ATP = L-phenylalanyl-tRNA(Phe) + AMP + diphosphate + H(+). This chain is Phenylalanine--tRNA ligase alpha subunit, found in Clostridium botulinum (strain 657 / Type Ba4).